A 252-amino-acid polypeptide reads, in one-letter code: Trans-aconitate 2-methyltransferase (252 aa).

The protein belongs to the methyltransferase superfamily. Tam family.

Its subcellular location is the cytoplasm. The catalysed reaction is trans-aconitate + S-adenosyl-L-methionine = (E)-3-(methoxycarbonyl)pent-2-enedioate + S-adenosyl-L-homocysteine. Functionally, catalyzes the S-adenosylmethionine monomethyl esterification of trans-aconitate. This chain is Trans-aconitate 2-methyltransferase, found in Escherichia coli O139:H28 (strain E24377A / ETEC).